A 270-amino-acid chain; its full sequence is 2-C-methyl-D-erythritol 4-phosphate cytidylyltransferase (270 aa).

The segment at 1–33 is disordered; sequence MSDESRPSPAETPATTFAETSAETSAAGRSPAR. Low complexity predominate over residues 7–27; it reads PSPAETPATTFAETSAETSAA.

It belongs to the IspD/TarI cytidylyltransferase family. IspD subfamily.

It carries out the reaction 2-C-methyl-D-erythritol 4-phosphate + CTP + H(+) = 4-CDP-2-C-methyl-D-erythritol + diphosphate. It participates in isoprenoid biosynthesis; isopentenyl diphosphate biosynthesis via DXP pathway; isopentenyl diphosphate from 1-deoxy-D-xylulose 5-phosphate: step 2/6. Catalyzes the formation of 4-diphosphocytidyl-2-C-methyl-D-erythritol from CTP and 2-C-methyl-D-erythritol 4-phosphate (MEP). The sequence is that of 2-C-methyl-D-erythritol 4-phosphate cytidylyltransferase from Streptomyces coelicolor (strain ATCC BAA-471 / A3(2) / M145).